We begin with the raw amino-acid sequence, 599 residues long: Microtubule-associated protein 70-2 (599 aa).

The tract at residues 1–30 (MADGGGGEEGSASALRGSARRRGAVQPAGL) is disordered. A coiled-coil region spans residues 43-349 (DPVKVELNRL…ARSEAQLKEK (307 aa)). The interval 227-460 (ILDRLHRQKV…HLLNRSTDAV (234 aa)) is required for targeting to microtubules. 2 disordered regions span residues 357–453 (LEDG…PHLL) and 557–599 (AMRL…RNLQ). The span at 404–420 (RRSPSFNSRSSLSTSSS) shows a compositional bias: low complexity. A coiled-coil region spans residues 533–570 (LTKAMEVEAKKMRREVAAMEKEVAAMRLDKDQENKAKR). A compositionally biased stretch (basic and acidic residues) spans 557 to 568 (AMRLDKDQENKA).

Belongs to the MAP70 family.

Its subcellular location is the cytoplasm. It is found in the cytoskeleton. Its function is as follows. Plant-specific protein that interact with microtubules. This chain is Microtubule-associated protein 70-2 (MAP70.2), found in Oryza sativa subsp. japonica (Rice).